The sequence spans 643 residues: Threonine--tRNA ligase (643 aa).

One can recognise a TGS domain in the interval methionine 1–threonine 61. The interval aspartate 243–proline 534 is catalytic. Zn(2+) contacts are provided by cysteine 334, histidine 385, and histidine 511.

Belongs to the class-II aminoacyl-tRNA synthetase family. In terms of assembly, homodimer. Zn(2+) serves as cofactor.

The protein localises to the cytoplasm. It catalyses the reaction tRNA(Thr) + L-threonine + ATP = L-threonyl-tRNA(Thr) + AMP + diphosphate + H(+). Functionally, catalyzes the attachment of threonine to tRNA(Thr) in a two-step reaction: L-threonine is first activated by ATP to form Thr-AMP and then transferred to the acceptor end of tRNA(Thr). Also edits incorrectly charged L-seryl-tRNA(Thr). The polypeptide is Threonine--tRNA ligase (Haemophilus influenzae (strain PittGG)).